Consider the following 466-residue polypeptide: UPF0652 protein C16A11.03c (466 aa).

This sequence belongs to the UPF0652 family.

The protein localises to the cytoplasm. It is found in the nucleus. This is UPF0652 protein C16A11.03c from Schizosaccharomyces pombe (strain 972 / ATCC 24843) (Fission yeast).